Consider the following 663-residue polypeptide: UvrABC system protein B (663 aa).

One can recognise a Helicase ATP-binding domain in the interval 31–418 (DNIEGGEKAQ…TDTVVEQIIR (388 aa)). 44–51 (GATGTGKT) is an ATP binding site. Positions 97–120 (YYDYYQPEAYVPSSDTYIEKDSSV) match the Beta-hairpin motif. Residues 435–601 (QMDDLLGEIN…TIKKEIRDLI (167 aa)) enclose the Helicase C-terminal domain. One can recognise a UVR domain in the interval 627-662 (QAEIKALQKQMQEAAELLDFELAAQIRDVILKLKAI).

This sequence belongs to the UvrB family. Forms a heterotetramer with UvrA during the search for lesions. Interacts with UvrC in an incision complex.

The protein localises to the cytoplasm. Its function is as follows. The UvrABC repair system catalyzes the recognition and processing of DNA lesions. A damage recognition complex composed of 2 UvrA and 2 UvrB subunits scans DNA for abnormalities. Upon binding of the UvrA(2)B(2) complex to a putative damaged site, the DNA wraps around one UvrB monomer. DNA wrap is dependent on ATP binding by UvrB and probably causes local melting of the DNA helix, facilitating insertion of UvrB beta-hairpin between the DNA strands. Then UvrB probes one DNA strand for the presence of a lesion. If a lesion is found the UvrA subunits dissociate and the UvrB-DNA preincision complex is formed. This complex is subsequently bound by UvrC and the second UvrB is released. If no lesion is found, the DNA wraps around the other UvrB subunit that will check the other stand for damage. This is UvrABC system protein B from Streptococcus agalactiae serotype Ia (strain ATCC 27591 / A909 / CDC SS700).